Here is a 691-residue protein sequence, read N- to C-terminus: Pentatricopeptide repeat-containing protein ATP4, chloroplastic (691 aa).

The span at 1 to 17 (MASLPLCRSPSSLLPSW) shows a compositional bias: low complexity. A chloroplast-targeting transit peptide spans 1 to 35 (MASLPLCRSPSSLLPSWPHRPISASFNPKNPSSPV). Residues 1 to 76 (MASLPLCRSP…SSNTRFLWVN (76 aa)) are disordered. Residues 24-33 (ASFNPKNPSS) are compositionally biased toward polar residues. Pro residues predominate over residues 45–56 (PPQPQDPSPPSD). The span at 61–76 (GTRPSSSSNTRFLWVN) shows a compositional bias: polar residues. PPR repeat units follow at residues 163–197 (KVIL…GVQP), 198–232 (DNAT…GCSP), 233–267 (DMLT…KWQL), 268–302 (DPVI…GVRP), 303–337 (NLVV…QVQP), 338–372 (SRAT…AMGI), 373–403 (DVML…MKAS), 411–445 (DSWS…GFKP), 446–480 (NIFV…GIIP), and 546–580 (KMPY…GIYA). The 86-residue stretch at 592–677 (LHLRGLSVGA…WFLTTNVAAK (86 aa)) folds into the Smr domain.

It belongs to the PPR family. P subfamily.

It localises to the plastid. The protein resides in the chloroplast stroma. Its function is as follows. Involved in translation and accumulation of chloroplast ATP synthase subunits. Interacts with the 5'-UTR of the chloroplast bicistronic atpB and atpE mRNA and activates its translation by facilitating ribosome association with the mRNA. Required for accumulation and activity of the chloroplast ATP synthase. Enhances atpA translation and is required for accumulation of specific processed atpF and psaJ transcripts. Required for the stabilization of bicistronic rpl16 and rpl14 mRNAs. In Zea mays (Maize), this protein is Pentatricopeptide repeat-containing protein ATP4, chloroplastic.